A 431-amino-acid chain; its full sequence is MSVIQDLQSRGLIAQTTDIEALDALLNEQKIALYCGFDPTADSLHIGHLLPVLALRRFQQAGHTPIALVGGATGMIGDPSFKAAERSLNSAETVAGWVGSIRSQLTPFLSFEGGNAAIMANNADWFGSMNCLDFLRDIGKHFSVNAMLNKESVKQRIDRDGAGISFTEFAYSLLQGYDFAELNKRHGAVLEIGGSDQWGNITAGIDLTRRLNQKQVFGLTLPLVTKSDGTKFGKTEGGAVWLNAKKTSPYQFYQFWLKVADADVYKFLKYFTFLSIEEIGVVEAKDKASGSKPEAQRILAEEMTRLIHGEEALAAAQRISESLFAEDQSRLTESDFEQLALDGLPAFEVSDGINAVEALVKTGLAASNKEARGFVNAKAVLLNGKPAEANNPNHAAERPDDAYLLIGEYKRFGKYTILRRGKRNHALLVWK.

Tyr34 provides a ligand contact to L-tyrosine. The 'HIGH' region signature appears at 39-48 (PTADSLHIGH). L-tyrosine-binding residues include Tyr171 and Gln175. The 'KMSKS' region motif lies at 231 to 235 (KFGKT). Lys234 contributes to the ATP binding site. Positions 353–422 (INAVEALVKT…GKYTILRRGK (70 aa)) constitute an S4 RNA-binding domain.

The protein belongs to the class-I aminoacyl-tRNA synthetase family. TyrS type 1 subfamily. In terms of assembly, homodimer.

It is found in the cytoplasm. It catalyses the reaction tRNA(Tyr) + L-tyrosine + ATP = L-tyrosyl-tRNA(Tyr) + AMP + diphosphate + H(+). Catalyzes the attachment of tyrosine to tRNA(Tyr) in a two-step reaction: tyrosine is first activated by ATP to form Tyr-AMP and then transferred to the acceptor end of tRNA(Tyr). This chain is Tyrosine--tRNA ligase, found in Neisseria gonorrhoeae (strain ATCC 700825 / FA 1090).